Here is a 107-residue protein sequence, read N- to C-terminus: U-scoloptoxin(19)-Sm1a (107 aa).

A signal peptide spans 1–20 (MRFLVSVAFLLTVSSLLVSG).

This sequence belongs to the scoloptoxin-19 family. Post-translationally, contains 6 disulfide bonds. In terms of tissue distribution, expressed by the venom gland.

It localises to the secreted. The sequence is that of U-scoloptoxin(19)-Sm1a from Scolopendra morsitans (Tanzanian blue ringleg centipede).